The chain runs to 448 residues: Argininosuccinate synthase (448 aa).

ATP contacts are provided by residues 17–25 and A43; that span reads AFSGGLDTS. Y99 lines the L-citrulline pocket. 2 residues coordinate ATP: G129 and T131. The L-aspartate site is built by T131, N135, and D136. Residue N135 coordinates L-citrulline. ATP is bound at residue D136. R139 and S192 together coordinate L-citrulline. D194 serves as a coordination point for ATP. T201, E203, and E280 together coordinate L-citrulline.

It belongs to the argininosuccinate synthase family. Type 2 subfamily. In terms of assembly, homotetramer.

The protein resides in the cytoplasm. It carries out the reaction L-citrulline + L-aspartate + ATP = 2-(N(omega)-L-arginino)succinate + AMP + diphosphate + H(+). The protein operates within amino-acid biosynthesis; L-arginine biosynthesis; L-arginine from L-ornithine and carbamoyl phosphate: step 2/3. The polypeptide is Argininosuccinate synthase (Pectobacterium atrosepticum (strain SCRI 1043 / ATCC BAA-672) (Erwinia carotovora subsp. atroseptica)).